A 944-amino-acid polypeptide reads, in one-letter code: Serine/threonine-protein kinase ATG1 (944 aa).

The Protein kinase domain occupies 24-327 (FNIGSEIGKG…FENFFTHQVV (304 aa)). ATP-binding positions include 30 to 38 (IGKGSFAQV) and K53. D167 (proton acceptor) is an active-site residue. The tract at residues 344-423 (RQESRDPRSA…NSPREGGEGL (80 aa)) is disordered. Over residues 356-367 (SGSPSLSSRSPR) the composition is skewed to low complexity. Residues 428–431 (PVAQ) carry the LIR motif. 5 disordered regions span residues 443 to 475 (YDSVTGRNRASPPTSLLDQVRRNRALSNPPITE), 512 to 572 (LGDA…GSAS), 777 to 801 (QLPDDHPSHPSNHGTESIASSAGSP), 860 to 895 (EGSGSETRRLSTGKEAEREAVKEVSGGELDSDEEAH), and 925 to 944 (AVRRRSGDMTPRSVPSHASS). 2 stretches are compositionally biased toward polar residues: residues 447 to 459 (TGRNRASPPTSLL) and 516 to 549 (SQRSGPITRRYTQQGAPTSTTGAISTPYSRNALA). Positions 563 to 572 (SLSASPGSAS) are enriched in low complexity. Residues 785-801 (HPSNHGTESIASSAGSP) show a composition bias toward polar residues. The span at 865 to 881 (ETRRLSTGKEAEREAVK) shows a compositional bias: basic and acidic residues. Residues 924-930 (QAVRRRS) are required for Cvt trafficking.

Belongs to the protein kinase superfamily. Ser/Thr protein kinase family. APG1/unc-51/ULK1 subfamily. Homodimer. Dimerization requires the presence of ATG13. Forms a ternary complex with ATG13 and ATG17.

It localises to the cytoplasm. The protein localises to the preautophagosomal structure membrane. It carries out the reaction L-seryl-[protein] + ATP = O-phospho-L-seryl-[protein] + ADP + H(+). The enzyme catalyses L-threonyl-[protein] + ATP = O-phospho-L-threonyl-[protein] + ADP + H(+). In terms of biological role, serine/threonine protein kinase involved in the cytoplasm to vacuole transport (Cvt) and found to be essential in autophagy, where it is required for the formation of autophagosomes. Involved in the clearance of protein aggregates which cannot be efficiently cleared by the proteasome. Required for selective autophagic degradation of the nucleus (nucleophagy) as well as for mitophagy which contributes to regulate mitochondrial quantity and quality by eliminating the mitochondria to a basal level to fulfill cellular energy requirements and preventing excess ROS production. Also involved in endoplasmic reticulum-specific autophagic process, in selective removal of ER-associated degradation (ERAD) substrates. Plays a key role in ATG9 and ATG23 cycling through the pre-autophagosomal structure and is necessary to promote ATG18 binding to ATG9 through phosphorylation of ATG9. Catalyzes phosphorylation of ATG4, decreasing the interaction between ATG4 and ATG8 and impairing deconjugation of PE-conjugated forms of ATG8. Autophagy is required for proper vegetative growth, asexual/sexual reproduction, and full virulence. Autophagy is particularly involved in the biosynthesis of deoxynivalenol (DON), an important virulence determinant. The polypeptide is Serine/threonine-protein kinase ATG1 (Gibberella zeae (strain ATCC MYA-4620 / CBS 123657 / FGSC 9075 / NRRL 31084 / PH-1) (Wheat head blight fungus)).